The sequence spans 275 residues: MTDTHLITTIDTAWDNRDSVSTDTTGEVRDAVETAINLLDSGKARVASRGDDGHWVVHQWLKKAVLLGFRLNPMDLIEGGIAGAKWWDKVPSKFEGWGEAEFKAAGFRAVPPCAVRRGAFIAPGAVLMPSYVNLGAYVGEGTMIDTWASVGSCAQVGANCHISAGTGIGGVLEPLQADPVIIEDNCFIGARSEVVEGVIVREGSVLAMGVYITRSTKIVDRASGEISYGEVPAYSVVVPGALPDPKGGPSLYCAVIVKRVDAQTRAKTSINDLLR.

Substrate-binding residues include arginine 108 and aspartate 145.

Belongs to the transferase hexapeptide repeat family. In terms of assembly, homotrimer.

It localises to the cytoplasm. It carries out the reaction (S)-2,3,4,5-tetrahydrodipicolinate + succinyl-CoA + H2O = (S)-2-succinylamino-6-oxoheptanedioate + CoA. Its pathway is amino-acid biosynthesis; L-lysine biosynthesis via DAP pathway; LL-2,6-diaminopimelate from (S)-tetrahydrodipicolinate (succinylase route): step 1/3. In Maricaulis maris (strain MCS10) (Caulobacter maris), this protein is 2,3,4,5-tetrahydropyridine-2,6-dicarboxylate N-succinyltransferase.